A 633-amino-acid polypeptide reads, in one-letter code: Probable extracellular metalloproteinase 5 (633 aa).

A signal peptide spans Met1–Ala20. The propeptide occupies His21 to His244. Asn285 carries N-linked (GlcNAc...) asparagine glycosylation. His428 is a Zn(2+) binding site. Glu429 is a catalytic residue. His432 serves as a coordination point for Zn(2+). N-linked (GlcNAc...) asparagine glycans are attached at residues Asn592 and Asn621.

It belongs to the peptidase M36 family. Zn(2+) is required as a cofactor.

The protein localises to the secreted. Its function is as follows. Secreted metalloproteinase probably acting as a virulence factor. The polypeptide is Probable extracellular metalloproteinase 5 (MEP5) (Arthroderma benhamiae (strain ATCC MYA-4681 / CBS 112371) (Trichophyton mentagrophytes)).